A 644-amino-acid polypeptide reads, in one-letter code: DNA mismatch repair protein MutL (644 aa).

The segment at 363–405 is disordered; that stretch reads GTFNPFTDDKTNQHYTKAGSGSGSGYSSGSSSSSGSGSGSSYS. Low complexity predominate over residues 389–405; the sequence is SSGSSSSSGSGSGSSYS.

This sequence belongs to the DNA mismatch repair MutL/HexB family.

Functionally, this protein is involved in the repair of mismatches in DNA. It is required for dam-dependent methyl-directed DNA mismatch repair. May act as a 'molecular matchmaker', a protein that promotes the formation of a stable complex between two or more DNA-binding proteins in an ATP-dependent manner without itself being part of a final effector complex. This Flavobacterium johnsoniae (strain ATCC 17061 / DSM 2064 / JCM 8514 / BCRC 14874 / CCUG 350202 / NBRC 14942 / NCIMB 11054 / UW101) (Cytophaga johnsonae) protein is DNA mismatch repair protein MutL.